The primary structure comprises 250 residues: Troponin I 1 (250 aa).

2 disordered regions span residues 1 to 59 and 194 to 250; these read MSQI…ERKK and SVFT…ADEE. Composition is skewed to basic and acidic residues over residues 21 to 45 and 206 to 221; these read DAQR…EAGQ and DKPE…KEES. Positions 229-250 are enriched in acidic residues; sequence PVEEEETAASEGEEEEEEADEE.

Belongs to the troponin I family. In terms of tissue distribution, strongly expressed in body wall muscle during embryogenesis, reduces during the larval stages to adult. In late-stage larvae and adults, expression is evident in the proximal gonad of both hermaphrodites and males.

Troponin I is the inhibitory subunit of troponin, the thin filament regulatory complex which confers calcium-sensitivity to muscle actomyosin ATPase activity. The protein is Troponin I 1 (tni-1) of Caenorhabditis elegans.